The sequence spans 165 residues: Peptide methionine sulfoxide reductase MsrA (165 aa).

Residue cysteine 11 is part of the active site.

It belongs to the MsrA Met sulfoxide reductase family.

The catalysed reaction is L-methionyl-[protein] + [thioredoxin]-disulfide + H2O = L-methionyl-(S)-S-oxide-[protein] + [thioredoxin]-dithiol. It carries out the reaction [thioredoxin]-disulfide + L-methionine + H2O = L-methionine (S)-S-oxide + [thioredoxin]-dithiol. Its function is as follows. Has an important function as a repair enzyme for proteins that have been inactivated by oxidation. Catalyzes the reversible oxidation-reduction of methionine sulfoxide in proteins to methionine. The sequence is that of Peptide methionine sulfoxide reductase MsrA from Ureaplasma parvum serovar 3 (strain ATCC 27815 / 27 / NCTC 11736).